We begin with the raw amino-acid sequence, 85 residues long: UPF0291 protein SPCG_1462 (85 aa).

The disordered stretch occupies residues 62–85 (TPEKLRQVQREKGLHGRSLDDPNS).

The protein belongs to the UPF0291 family.

It localises to the cytoplasm. The protein is UPF0291 protein SPCG_1462 of Streptococcus pneumoniae (strain CGSP14).